The chain runs to 416 residues: Meiotically up-regulated protein PB1A10.08 (416 aa).

Its subcellular location is the cytoplasm. In terms of biological role, may have a role in meiosis and sporulation. The chain is Meiotically up-regulated protein PB1A10.08 from Schizosaccharomyces pombe (strain 972 / ATCC 24843) (Fission yeast).